The sequence spans 402 residues: Large ribosomal subunit protein uL3 (402 aa).

The tract at residues 1–35 (MSHRKFSAPRHGSMGFTPKKRSKRHRGKVKAFPKD) is disordered. Basic residues predominate over residues 18-31 (PKKRSKRHRGKVKA).

The protein belongs to the universal ribosomal protein uL3 family.

It is found in the cytoplasm. Its function is as follows. The L3 protein is a component of the large subunit of cytoplasmic ribosomes. This Toxocara canis (Canine roundworm) protein is Large ribosomal subunit protein uL3 (RPL3).